The following is a 731-amino-acid chain: Vezatin (731 aa).

2 helical membrane-spanning segments follow: residues 91-111 (LATP…LLVM) and 114-134 (TWWI…YLVI). Residues 382–414 (VRSLQLHLKALLNEVIILEDELEKLVCTKETQE) adopt a coiled-coil conformation. 2 disordered regions span residues 570–671 (PVDP…DSLQ) and 710–731 (QTFG…IEEK). A compositionally biased stretch (polar residues) spans 577 to 586 (ISNSEPSMNS). Basic and acidic residues predominate over residues 590 to 601 (KVSKNDTEEESS). Positions 658–671 (GLTTAPPTPRDSLQ) are enriched in polar residues. Positions 712 to 721 (FGDEEEEQII) are enriched in acidic residues. The segment covering 722-731 (EENKNKIEEK) has biased composition (basic and acidic residues).

This sequence belongs to the vezatin family. In terms of assembly, interacts with USH2A (via the cytoplasmic region); the interaction associates VEZT with the USH2 complex at the stereocilia base. Interacts with myosin MYO7A and the cadherin-catenins complex.

It localises to the cell membrane. It is found in the cell projection. The protein localises to the stereocilium membrane. The protein resides in the cell junction. Its subcellular location is the adherens junction. It localises to the nucleus. It is found in the cytoplasmic vesicle. The protein localises to the secretory vesicle. The protein resides in the acrosome. In terms of biological role, plays a pivotal role in the establishment of adherens junctions and their maintenance in adult life. Required for morphogenesis of the preimplantation embryo, and for the implantation process. The protein is Vezatin (VEZT) of Pongo abelii (Sumatran orangutan).